We begin with the raw amino-acid sequence, 162 residues long: Phosphopantetheine adenylyltransferase (162 aa).

Serine 9 is a binding site for substrate. ATP-binding positions include 9–10 and histidine 17; that span reads SF. Substrate contacts are provided by lysine 41, isoleucine 77, and lysine 91. ATP is bound by residues 92–94, glutamate 102, and 126–132; these read GLR and YAFLSSS.

This sequence belongs to the bacterial CoaD family. In terms of assembly, homohexamer. Requires Mg(2+) as cofactor.

It is found in the cytoplasm. It catalyses the reaction (R)-4'-phosphopantetheine + ATP + H(+) = 3'-dephospho-CoA + diphosphate. Its pathway is cofactor biosynthesis; coenzyme A biosynthesis; CoA from (R)-pantothenate: step 4/5. Its function is as follows. Reversibly transfers an adenylyl group from ATP to 4'-phosphopantetheine, yielding dephospho-CoA (dPCoA) and pyrophosphate. The sequence is that of Phosphopantetheine adenylyltransferase from Frankia casuarinae (strain DSM 45818 / CECT 9043 / HFP020203 / CcI3).